Here is a 511-residue protein sequence, read N- to C-terminus: 2,3-bisphosphoglycerate-independent phosphoglycerate mutase (511 aa).

Mn(2+) is bound at residue Asp12. At Tyr36 the chain carries Phosphotyrosine. Ser62 contributes to the Mn(2+) binding site. Catalysis depends on Ser62, which acts as the Phosphoserine intermediate. Substrate-binding positions include His123, Arg153–Asp154, Arg185, Arg191, Arg261–Arg264, and Lys336. Asp403, His407, Asp444, His445, and His462 together coordinate Mn(2+).

The protein belongs to the BPG-independent phosphoglycerate mutase family. Monomer. Mn(2+) serves as cofactor.

It carries out the reaction (2R)-2-phosphoglycerate = (2R)-3-phosphoglycerate. It functions in the pathway carbohydrate degradation; glycolysis; pyruvate from D-glyceraldehyde 3-phosphate: step 3/5. Could be inhibited during sporulation by acidification of the forespore, thus allowing accumulation of the spore's large depot of 3-phosphoglyceric acid. In terms of biological role, essential for rapid growth and for sporulation. Catalyzes the interconversion of 2-phosphoglycerate (2-PGA) and 3-phosphoglycerate (3-PGA). The polypeptide is 2,3-bisphosphoglycerate-independent phosphoglycerate mutase (Geobacillus stearothermophilus (Bacillus stearothermophilus)).